Consider the following 161-residue polypeptide: Interleukin-17F (161 aa).

An N-terminal signal peptide occupies residues 1-28 (MKGSCETTMVKSLLLLMLGFAIISSGAA). The N-linked (GlcNAc...) asparagine glycan is linked to asparagine 83. Disulfide bonds link cysteine 100-cysteine 150 and cysteine 105-cysteine 152.

This sequence belongs to the IL-17 family. Homodimer; disulfide-linked. Heterodimer with IL17A (IL17A-IL17F). Forms complexes with IL17RA and IL17RC receptors with 2:1 binding stoichiometry: two receptor chains for one interleukin molecule. IL17F homodimer forms predominantly complexes with IL17RC homodimer, whereas IL17A-IL17F favors complexes with IL17RA-IL17RC. IL17RA and IL17RC chains cannot distinguish between IL17A and IL17F molecules, potentially enabling the formation of topologically distinct complexes.

The protein localises to the secreted. Effector cytokine of innate and adaptive immune system involved in antimicrobial host defense and maintenance of tissue integrity. IL17A-IL17F signals via IL17RA-IL17RC heterodimeric receptor complex, triggering homotypic interaction of IL17RA and IL17RC chains with TRAF3IP2 adapter through SEFIR domains. This leads to downstream TRAF6-mediated activation of NF-kappa-B and MAPkinase pathways ultimately resulting in transcriptional activation of cytokines, chemokines, antimicrobial peptides and matrix metalloproteinases, with potential strong immune inflammation. IL17A-IL17F is primarily involved in host defense against extracellular bacteria and fungi by inducing neutrophilic inflammation. As signature effector cytokine of T-helper 17 cells (Th17), primarily induces neutrophil activation and recruitment at infection and inflammatory sites. Stimulates the production of antimicrobial beta-defensins DEFB1, DEFB103A, and DEFB104A by mucosal epithelial cells, limiting the entry of microbes through the epithelial barriers. IL17F homodimer can signal via IL17RC homodimeric receptor complex, triggering downstream activation of TRAF6 and NF-kappa-B signaling pathway. Via IL17RC induces transcriptional activation of IL33, a potent cytokine that stimulates group 2 innate lymphoid cells and adaptive T-helper 2 cells involved in pulmonary allergic response to fungi. Likely via IL17RC, promotes sympathetic innervation of peripheral organs by coordinating the communication between gamma-delta T cells and parenchymal cells. Stimulates sympathetic innervation of thermogenic adipose tissue by driving TGFB1 expression. Regulates the composition of intestinal microbiota and immune tolerance by inducing antimicrobial proteins that specifically control the growth of commensal Firmicutes and Bacteroidetes. The sequence is that of Interleukin-17F (Il17f) from Rattus norvegicus (Rat).